A 345-amino-acid chain; its full sequence is Polyprenyl transferase dpmpC (345 aa).

A run of 8 helical transmembrane segments spans residues 24-44, 60-80, 101-121, 183-203, 220-240, 261-281, 286-306, and 319-339; these read PVFASFAGLWSTLLAGAARLA, GLCFLAAYIFYGAGTVWNDWV, VTTFQAMLWMVLQTLATWYLL, LYVYPQYILGFIVAWPAVIGW, CLPLCSMVYFWIIYLNTAYSY, HLHLLLVALASPVPVCMLLFL, SFWLWATWLGGWTASFAEQLI, and LHKSNFMLGIWTIFACAVELL.

This sequence belongs to the UbiA prenyltransferase family. Mg(2+) is required as a cofactor.

Its subcellular location is the membrane. It participates in secondary metabolite biosynthesis; terpenoid biosynthesis. Its function is as follows. Polyprenyl transferase; part of the gene cluster that mediates the biosynthesis of diterpenoid pyrones. The first step of the pathway is the synthesis of the alpha-pyrone moiety by the polyketide synthase dpmpA via condensation of one acetyl-CoA starter unit with 3 malonyl-CoA units and 2 methylations. The alpha-pyrone is then combined with geranylgeranyl pyrophosphate (GGPP) formed by the GGPP synthase dpmpD through the action of the prenyltransferase dpmpC to yield a linear alpha-pyrone diterpenoid. Subsequent steps in the diterpenoid pyrone biosynthetic pathway involve the decalin core formation, which is initiated by the epoxidation of the C10-C11 olefin by the FAD-dependent oxidoreductase dpmpE, and is followed by a cyclization cascade catalyzed by the terpene cyclase dpmpB. The short chain dehydrogenase/reductase dpmpG then oxidizes the 8S hydroxy group to a ketone and the short chain dehydrogenase/reductase dpmpH reduces the ketone to the 8R hydroxy group to yield higginsianin B. Higginsianin B is further methylated by the methyltransferase dpmpI to produce the intermediate named FDDP B. The cytochrome P450 monooxygenase dpmpJ then oxidizes the C-26 methyl to primary alcohol, producing the final diterpenoid pyrone with a C-26 primary alcohol on the gamma-pyrone moiety named FDDP C. The chain is Polyprenyl transferase dpmpC from Macrophomina phaseolina (strain MS6) (Charcoal rot fungus).